We begin with the raw amino-acid sequence, 430 residues long: Resistance to inhibitors of cholinesterase protein 19 (430 aa).

The AH domain maps to 56–260 (ASDNELDTCL…TSRAFETLAE (205 aa)). The segment at 279-342 (GTKPERERKS…SPLIEDVDDE (64 aa)) is disordered. Residues 281–294 (KPERERKSEKEESA) show a composition bias toward basic and acidic residues.

In terms of assembly, interacts with the GTPase activator protein tbc-8; the interaction is direct and may be required for the activation of rab-2 and dense vesicle maturation in cholinergic motoneurons. Interacts with rund-1. In terms of tissue distribution, expressed in all neurons. Highly expressed in m2 pharyngeal neurons and some pharyngeal interneurons. Also expressed in the excretory canal and the gland cells located just below the nerve ring in the head.

The protein localises to the cytoplasm. It is found in the cytoplasmic vesicle membrane. In terms of biological role, may be involved in neurotransmitter secretion. In association with the GTPase activator protein tbc-8 activates rab-2 during dense core vesicle maturation in cholinergic motoneurons. The polypeptide is Resistance to inhibitors of cholinesterase protein 19 (Caenorhabditis elegans).